Reading from the N-terminus, the 539-residue chain is T-complex protein 1 subunit delta (539 aa).

The interval 1-28 is disordered; that stretch reads MPENVASRSGPPAAGPGNRGKGAYQDRD. The residue at position 19 (arginine 19) is an Omega-N-methylarginine. Position 21 is an N6-acetyllysine (lysine 21). At serine 36 the chain carries Phosphoserine. Position 53 (glycine 53) interacts with ADP. Glycine 53 provides a ligand contact to ATP. Aspartate 104 is a Mg(2+) binding site. Glycine 105, threonine 106, threonine 107, serine 108, asparagine 172, serine 173, and lysine 174 together coordinate ADP. 2 residues coordinate ATP: glycine 105 and threonine 106. Lysine 174 contributes to the ATP binding site. Phosphoserine is present on residues serine 184 and serine 202. 4 positions are modified to N6-acetyllysine: lysine 288, lysine 302, lysine 319, and lysine 326. Glycine 425 contacts ADP. Serine 444 is modified (phosphoserine). Residue glutamine 510 coordinates ADP.

The protein belongs to the TCP-1 chaperonin family. Component of the chaperonin-containing T-complex (TRiC), a hexadecamer composed of two identical back-to-back stacked rings enclosing a protein folding chamber. Each ring is made up of eight different subunits: TCP1/CCT1, CCT2, CCT3, CCT4, CCT5, CCT6A/CCT6, CCT7, CCT8. Interacts with PACRG. Interacts with DNAAF4. Interacts with DLEC1.

The protein resides in the cytoplasm. Its subcellular location is the melanosome. It is found in the cytoskeleton. The protein localises to the microtubule organizing center. It localises to the centrosome. The protein resides in the cilium basal body. It catalyses the reaction ATP + H2O = ADP + phosphate + H(+). Its function is as follows. Component of the chaperonin-containing T-complex (TRiC), a molecular chaperone complex that assists the folding of actin, tubulin and other proteins upon ATP hydrolysis. The TRiC complex mediates the folding of WRAP53/TCAB1, thereby regulating telomere maintenance. As part of the TRiC complex may play a role in the assembly of BBSome, a complex involved in ciliogenesis regulating transports vesicles to the cilia. This Rattus norvegicus (Rat) protein is T-complex protein 1 subunit delta (Cct4).